A 633-amino-acid chain; its full sequence is Peptidoglycan D,D-transpeptidase MrdA (633 aa).

Residues 22-42 (LVAFLGILLLTGVLIANLYNL) form a helical membrane-spanning segment. Ser330 acts as the Acyl-ester intermediate in catalysis.

It belongs to the transpeptidase family. MrdA subfamily.

The protein resides in the cell inner membrane. It catalyses the reaction Preferential cleavage: (Ac)2-L-Lys-D-Ala-|-D-Ala. Also transpeptidation of peptidyl-alanyl moieties that are N-acyl substituents of D-alanine.. It participates in cell wall biogenesis; peptidoglycan biosynthesis. Catalyzes cross-linking of the peptidoglycan cell wall. This Escherichia coli O157:H7 protein is Peptidoglycan D,D-transpeptidase MrdA.